Consider the following 193-residue polypeptide: MSALRLIVGLGNPGPEHAQTRHNAGFRFVDALIERSGARWALDSKLFGETAKVEVAGQPVWLLKPATFMNLSGKSITAALRFWKIEPEHLLVAHDELDLAPGTARLKFDGGHGGQNGLRDTIRLLGHGKFHRLRVGIGHPGHKDRVVPWVLGRAGREDDAAIGAAVDAAIDVLPLAMEGNFNEAMKRLHTEKK.

Histidine 17 provides a ligand contact to tRNA. The active-site Proton acceptor is the histidine 22. Residues phenylalanine 68, asparagine 70, and asparagine 116 each coordinate tRNA.

This sequence belongs to the PTH family. Monomer.

The protein localises to the cytoplasm. The enzyme catalyses an N-acyl-L-alpha-aminoacyl-tRNA + H2O = an N-acyl-L-amino acid + a tRNA + H(+). Its function is as follows. Hydrolyzes ribosome-free peptidyl-tRNAs (with 1 or more amino acids incorporated), which drop off the ribosome during protein synthesis, or as a result of ribosome stalling. In terms of biological role, catalyzes the release of premature peptidyl moieties from peptidyl-tRNA molecules trapped in stalled 50S ribosomal subunits, and thus maintains levels of free tRNAs and 50S ribosomes. This chain is Peptidyl-tRNA hydrolase, found in Xanthomonas euvesicatoria pv. vesicatoria (strain 85-10) (Xanthomonas campestris pv. vesicatoria).